A 514-amino-acid chain; its full sequence is Respiratory nitrate reductase 2 beta chain (514 aa).

3 4Fe-4S ferredoxin-type domains span residues 7 to 35 (VGMV…GREG), 174 to 205 (TFMM…KREE), and 207 to 236 (GIVL…FNWK). 7 residues coordinate [4Fe-4S] cluster: Cys-16, Cys-19, Cys-22, Cys-26, Cys-183, Cys-186, and Cys-191. Positions 195, 216, and 222 each coordinate [3Fe-4S] cluster. Residues Cys-226, Cys-243, Cys-246, Cys-258, and Cys-262 each coordinate [4Fe-4S] cluster.

In terms of assembly, dimer of heterotrimers each composed of an alpha, a beta and a gamma chain. Alpha and beta are catalytic chains; gamma chains are involved in binding the enzyme complex to the cytoplasmic membrane. [4Fe-4S] cluster is required as a cofactor. [3Fe-4S] cluster serves as cofactor.

Its subcellular location is the cell membrane. The enzyme catalyses nitrate + a quinol = a quinone + nitrite + H2O. In terms of biological role, this is a second nitrate reductase enzyme which can substitute for the NRA enzyme and allows E.coli to use nitrate as an electron acceptor during anaerobic growth. The beta chain is an electron transfer unit containing four cysteine clusters involved in the formation of iron-sulfur centers. Electrons are transferred from the gamma chain to the molybdenum cofactor of the alpha subunit. The polypeptide is Respiratory nitrate reductase 2 beta chain (narY) (Escherichia coli (strain K12)).